The following is a 224-amino-acid chain: Urease accessory protein UreF (224 aa).

This sequence belongs to the UreF family. In terms of assembly, ureD, UreF and UreG form a complex that acts as a GTP-hydrolysis-dependent molecular chaperone, activating the urease apoprotein by helping to assemble the nickel containing metallocenter of UreC. The UreE protein probably delivers the nickel.

It localises to the cytoplasm. Its function is as follows. Required for maturation of urease via the functional incorporation of the urease nickel metallocenter. The chain is Urease accessory protein UreF from Pseudomonas putida (strain GB-1).